A 62-amino-acid polypeptide reads, in one-letter code: Large ribosomal subunit protein bL28 (62 aa).

This sequence belongs to the bacterial ribosomal protein bL28 family.

This Acetivibrio thermocellus (strain ATCC 27405 / DSM 1237 / JCM 9322 / NBRC 103400 / NCIMB 10682 / NRRL B-4536 / VPI 7372) (Clostridium thermocellum) protein is Large ribosomal subunit protein bL28.